A 209-amino-acid polypeptide reads, in one-letter code: Thiamine-phosphate synthase (209 aa).

Residues 35-39 and asparagine 67 each bind 4-amino-2-methyl-5-(diphosphooxymethyl)pyrimidine; that span reads QYRDK. The Mg(2+) site is built by aspartate 68 and aspartate 86. Threonine 105 serves as a coordination point for 4-amino-2-methyl-5-(diphosphooxymethyl)pyrimidine. Residue 132–134 participates in 2-[(2R,5Z)-2-carboxy-4-methylthiazol-5(2H)-ylidene]ethyl phosphate binding; sequence SNT. Lysine 135 is a 4-amino-2-methyl-5-(diphosphooxymethyl)pyrimidine binding site. 2-[(2R,5Z)-2-carboxy-4-methylthiazol-5(2H)-ylidene]ethyl phosphate is bound at residue glycine 162.

It belongs to the thiamine-phosphate synthase family. The cofactor is Mg(2+).

The enzyme catalyses 2-[(2R,5Z)-2-carboxy-4-methylthiazol-5(2H)-ylidene]ethyl phosphate + 4-amino-2-methyl-5-(diphosphooxymethyl)pyrimidine + 2 H(+) = thiamine phosphate + CO2 + diphosphate. It carries out the reaction 2-(2-carboxy-4-methylthiazol-5-yl)ethyl phosphate + 4-amino-2-methyl-5-(diphosphooxymethyl)pyrimidine + 2 H(+) = thiamine phosphate + CO2 + diphosphate. It catalyses the reaction 4-methyl-5-(2-phosphooxyethyl)-thiazole + 4-amino-2-methyl-5-(diphosphooxymethyl)pyrimidine + H(+) = thiamine phosphate + diphosphate. The protein operates within cofactor biosynthesis; thiamine diphosphate biosynthesis; thiamine phosphate from 4-amino-2-methyl-5-diphosphomethylpyrimidine and 4-methyl-5-(2-phosphoethyl)-thiazole: step 1/1. Condenses 4-methyl-5-(beta-hydroxyethyl)thiazole monophosphate (THZ-P) and 2-methyl-4-amino-5-hydroxymethyl pyrimidine pyrophosphate (HMP-PP) to form thiamine monophosphate (TMP). The chain is Thiamine-phosphate synthase from Pseudomonas fluorescens (strain SBW25).